The primary structure comprises 1137 residues: Phytochrome C (1137 aa).

The segment covering 1 to 18 (MSSSRSNNRATCSRSSSA) has biased composition (low complexity). A disordered region spans residues 1–27 (MSSSRSNNRATCSRSSSARSKHSARVV). The GAF domain maps to 217–400 (NLSLLCDVLV…VFGIQINKEV (184 aa)). Position 322 (Cys-322) interacts with phytochromobilin. 2 PAS domains span residues 620 to 690 (VTNE…LQGI) and 750 to 824 (IQGD…TKLS). Residues 904–1124 (YIRQELRNPL…IVLVEFPVAQ (221 aa)) enclose the Histidine kinase domain.

It belongs to the phytochrome family. As to quaternary structure, homodimer. Contains one covalently linked phytochromobilin chromophore.

In terms of biological role, regulatory photoreceptor which exists in two forms that are reversibly interconvertible by light: the Pr form that absorbs maximally in the red region of the spectrum and the Pfr form that absorbs maximally in the far-red region. Photoconversion of Pr to Pfr induces an array of morphogenic responses, whereas reconversion of Pfr to Pr cancels the induction of those responses. Pfr controls the expression of a number of nuclear genes including those encoding the small subunit of ribulose-bisphosphate carboxylase, chlorophyll A/B binding protein, protochlorophyllide reductase, rRNA, etc. It also controls the expression of its own gene(s) in a negative feedback fashion. The protein is Phytochrome C (PHYC) of Oryza sativa subsp. japonica (Rice).